A 484-amino-acid polypeptide reads, in one-letter code: Keratin, type I cytoskeletal 14 (484 aa).

A disordered region spans residues 1 to 20 (MATCSRQFTSSSSMKGSCGI). A head region spans residues 1-120 (MATCSRQFTS…GIGDGLLVGS (120 aa)). Residues 121-156 (EKVTMQNLNDRLATYLDKVRALEEANTELEVKIRDW) form a coil 1A region. Residues 121-432 (EKVTMQNLND…RLLEGEDAHL (312 aa)) form the IF rod domain. The linker 1 stretch occupies residues 157–174 (YQRQRPTEIKDYSPYFKT). The interval 175–266 (IEDLKSKILA…KNHEEEMASM (92 aa)) is coil 1B. The interval 267-289 (RGQVGGDVNVEMDAAPGVDLSRI) is linker 12. The tract at residues 290–428 (LNEMRDQYEK…ATYRRLLEGE (139 aa)) is coil 2. Positions 429 to 484 (DAHLSSSQFSSSSQFSSGSQSSRDVTSTNRQIRTKVMDVHDGKVVSTHEQVLRTKN) are tail. The interaction with Type I keratins and keratin filaments stretch occupies residues 431 to 484 (HLSSSQFSSSSQFSSGSQSSRDVTSTNRQIRTKVMDVHDGKVVSTHEQVLRTKN). Positions 435 to 450 (SQFSSSSQFSSGSQSS) are enriched in low complexity. Positions 435–457 (SQFSSSSQFSSGSQSSRDVTSTN) are disordered. Phosphoserine is present on Ser447.

Belongs to the intermediate filament family. As to quaternary structure, heterotetramer of two type I and two type II keratins. Forms a disulfide-linked heterodimer (via 2B domains) with KRT5 (via 2B domains). Forms a heterodimer with KRT1; the interaction is more abundant in the absence of KRT5. Interacts with PLEC isoform 1C, when in a heterodimer with KRT5. Interacts with TRADD and with keratin filaments. Associates with other type I keratins. Interacts with EPPK1. Interacts with KLHL24. Interacts with PKP1 (via N-terminus) and PKP2. In terms of processing, a disulfide bond is formed between rather than within filaments and promotes the formation of a keratin filament cage around the nucleus. Ubiquitinated by the BCR(KLHL24) E3 ubiquitin ligase complex. In terms of tissue distribution, expressed in the corneal epithelium (at protein level). Expressed in the basal layer of the epidermis and the outer root sheath of hair follicles (at protein level). Expressed in the epithelial basal layer in the tail epidermis. Expressed in the parabasal cell row, basal cell layer, and suprabasal epithelial layer of the tongue.

It localises to the cytoplasm. It is found in the nucleus. Functionally, the nonhelical tail domain is involved in promoting KRT5-KRT14 filaments to self-organize into large bundles and enhances the mechanical properties involved in resilience of keratin intermediate filaments in vitro. This Mus musculus (Mouse) protein is Keratin, type I cytoskeletal 14 (Krt14).